Consider the following 62-residue polypeptide: Protein YnfQ (62 aa).

The protein belongs to the YmcF/YnqF peptide family.

The polypeptide is Protein YnfQ (Escherichia coli (strain K12)).